We begin with the raw amino-acid sequence, 451 residues long: Probable tyrosyl-DNA phosphodiesterase (451 aa).

Positions 1 to 34 (MKRTIQETPGPSSTTVPPPKKLNSQRNGSNLEPG) are disordered. Over residues 22 to 32 (LNSQRNGSNLE) the composition is skewed to polar residues. H131 (nucleophile) is an active-site residue. Residue K133 coordinates substrate. Residues 266–269 (SIGS) are interaction with DNA. The active-site Proton donor/acceptor is H356. K358 is a substrate binding site.

The protein belongs to the tyrosyl-DNA phosphodiesterase family.

Its subcellular location is the nucleus. Its function is as follows. DNA repair enzyme that can remove a variety of covalent adducts from DNA through hydrolysis of a 3'-phosphodiester bond, giving rise to DNA with a free 3' phosphate. Catalyzes the hydrolysis of dead-end complexes between DNA and the topoisomerase I active site tyrosine residue. Hydrolyzes 3'-phosphoglycolates on protruding 3' ends on DNA double-strand breaks due to DNA damage by radiation and free radicals. Acts on blunt-ended double-strand DNA breaks and on single-stranded DNA. May have low 3'exonuclease activity and may be able to remove a single nucleoside from the 3'end of DNA and RNA molecules with 3'hydroxyl groups. Has no exonuclease activity towards DNA or RNA with a 3'phosphate. This Caenorhabditis elegans protein is Probable tyrosyl-DNA phosphodiesterase.